Reading from the N-terminus, the 246-residue chain is Pyridoxine 5'-phosphate synthase (246 aa).

Residue Asn-12 coordinates 3-amino-2-oxopropyl phosphate. 14–15 (DH) provides a ligand contact to 1-deoxy-D-xylulose 5-phosphate. Arg-23 is a 3-amino-2-oxopropyl phosphate binding site. The active-site Proton acceptor is His-48. The 1-deoxy-D-xylulose 5-phosphate site is built by Arg-50 and His-55. Glu-75 acts as the Proton acceptor in catalysis. Position 105 (Thr-105) interacts with 1-deoxy-D-xylulose 5-phosphate. The active-site Proton donor is the His-196. Residues Gly-197 and 218–219 (GH) each bind 3-amino-2-oxopropyl phosphate.

Belongs to the PNP synthase family. Homooctamer; tetramer of dimers.

The protein localises to the cytoplasm. The enzyme catalyses 3-amino-2-oxopropyl phosphate + 1-deoxy-D-xylulose 5-phosphate = pyridoxine 5'-phosphate + phosphate + 2 H2O + H(+). It participates in cofactor biosynthesis; pyridoxine 5'-phosphate biosynthesis; pyridoxine 5'-phosphate from D-erythrose 4-phosphate: step 5/5. In terms of biological role, catalyzes the complicated ring closure reaction between the two acyclic compounds 1-deoxy-D-xylulose-5-phosphate (DXP) and 3-amino-2-oxopropyl phosphate (1-amino-acetone-3-phosphate or AAP) to form pyridoxine 5'-phosphate (PNP) and inorganic phosphate. The protein is Pyridoxine 5'-phosphate synthase of Pseudomonas putida (strain ATCC 47054 / DSM 6125 / CFBP 8728 / NCIMB 11950 / KT2440).